Consider the following 140-residue polypeptide: HTH-type transcriptional regulator LysM (140 aa).

In terms of domain architecture, HTH asnC-type spans 4-67 (VDESDLKILE…ELENEIRAIV (64 aa)). The H-T-H motif DNA-binding region spans 23-42 (YTSIAKELKISEAAVRKRIE).

Homotetramer.

The protein localises to the cytoplasm. It participates in amino-acid biosynthesis; L-lysine biosynthesis via AAA pathway [regulation]. In terms of biological role, in the absence or at low concentrations of lysine, activates the biosynthesis of this amino acid via the alpha-aminoadipate (AAA) pathway. The polypeptide is HTH-type transcriptional regulator LysM (lysM) (Sulfurisphaera tokodaii (strain DSM 16993 / JCM 10545 / NBRC 100140 / 7) (Sulfolobus tokodaii)).